A 364-amino-acid chain; its full sequence is Aminomethyltransferase (364 aa).

Belongs to the GcvT family. As to quaternary structure, the glycine cleavage system is composed of four proteins: P, T, L and H.

It carries out the reaction N(6)-[(R)-S(8)-aminomethyldihydrolipoyl]-L-lysyl-[protein] + (6S)-5,6,7,8-tetrahydrofolate = N(6)-[(R)-dihydrolipoyl]-L-lysyl-[protein] + (6R)-5,10-methylene-5,6,7,8-tetrahydrofolate + NH4(+). The glycine cleavage system catalyzes the degradation of glycine. The polypeptide is Aminomethyltransferase (Shewanella halifaxensis (strain HAW-EB4)).